Consider the following 1000-residue polypeptide: C2 domain-containing protein 5 (1000 aa).

In terms of domain architecture, C2 spans 1–109; the sequence is MPGKLKVKIV…EAATVISGWF (109 aa). Ca(2+) contacts are provided by D19, D26, D76, D78, S81, and D84. S197 is subject to Phosphoserine; by PKB/AKT2. 2 positions are modified to phosphoserine: S200 and S260. The disordered stretch occupies residues 265-330; sequence MKEIPFNEDP…SGSAGKEGGP (66 aa). Polar residues predominate over residues 274 to 289; sequence PNPNTHSSGPSTPLKN. The span at 290 to 318 shows a compositional bias: low complexity; it reads QTYSFSPSKSYSRQSSSSDTDLSLTPKTG. A phosphoserine mark is found at S293, S295, S304, S305, and S306. Residue T317 is modified to Phosphothreonine. The segment covering 319–328 has biased composition (gly residues); that stretch reads MGSGSAGKEG. S323 is modified (phosphoserine). The residue at position 601 (T601) is a Phosphothreonine. The segment at 639 to 669 is disordered; it reads EIIGSPIPEPRQRSRLLRSQSESSDEVTELD. Residues S643, S657, S659, S661, and S662 each carry the phosphoserine modification. T666 is modified (phosphothreonine). S671 is subject to Phosphoserine. The residue at position 807 (T807) is a Phosphothreonine. Phosphoserine occurs at positions 817 and 852.

Ca(2+) is required as a cofactor. In terms of processing, phosphorylated on Ser-197 by active myristoylated kinase AKT2; insulin-stimulated phosphorylation by AKT2 regulates SLC2A4/GLUT4 translocation into the plasma membrane.

It localises to the cytoplasmic vesicle membrane. The protein localises to the cytoplasm. Its subcellular location is the cell cortex. It is found in the cell membrane. The protein resides in the cell projection. It localises to the ruffle. In terms of biological role, required for insulin-stimulated glucose transport and glucose transporter SLC2A4/GLUT4 translocation from intracellular glucose storage vesicle (GSV) to the plasma membrane (PM) in adipocytes. Binds phospholipid membranes in a calcium-dependent manner and is necessary for the optimal membrane fusion between SLC2A4/GLUT4 GSV and the PM. This chain is C2 domain-containing protein 5 (C2CD5), found in Pongo abelii (Sumatran orangutan).